Consider the following 438-residue polypeptide: Glutaryl-CoA dehydrogenase, mitochondrial (438 aa).

The transit peptide at 1 to 44 directs the protein to the mitochondrion; the sequence is MALRGVSVQLLSRVPGLRVFRTWVSSAAQTEKVGRTQSQLAKSS. Substrate contacts are provided by residues 138–139 and Ser186; that span reads RS. FAD-binding positions include 177–186, Ser186, and 212–214; these read FGLTEPNSGS and WIT. Lys240 is subject to N6-acetyllysine. Substrate is bound at residue 287-294; that stretch reads FGCLNNGR. Residues Arg319, Gln330, and 387-391 each bind FAD; that span reads DMLGG. The active-site Proton acceptor is the Glu414. Residue Gly415 participates in substrate binding. Residues Thr416, 416 to 418, and Phe434 each bind FAD; that span reads THD.

The protein belongs to the acyl-CoA dehydrogenase family. Homotetramer. FAD is required as a cofactor.

It is found in the mitochondrion matrix. It carries out the reaction glutaryl-CoA + oxidized [electron-transfer flavoprotein] + 2 H(+) = (2E)-butenoyl-CoA + reduced [electron-transfer flavoprotein] + CO2. It participates in amino-acid metabolism; lysine degradation. Its pathway is amino-acid metabolism; tryptophan metabolism. Catalyzes the oxidative decarboxylation of glutaryl-CoA to crotonyl-CoA and CO(2) in the degradative pathway of L-lysine, L-hydroxylysine, and L-tryptophan metabolism. It uses electron transfer flavoprotein as its electron acceptor. The chain is Glutaryl-CoA dehydrogenase, mitochondrial (GCDH) from Macaca fascicularis (Crab-eating macaque).